A 439-amino-acid polypeptide reads, in one-letter code: Protein translocase subunit SecY (439 aa).

The next 10 membrane-spanning stretches (helical) occupy residues isoleucine 19–glycine 39, tyrosine 68–leucine 88, tyrosine 116–methionine 136, leucine 151–isoleucine 171, phenylalanine 176–valine 196, tryptophan 216–valine 236, valine 269–leucine 289, tryptophan 312–valine 332, valine 373–glycine 393, and lysine 396–valine 416.

The protein belongs to the SecY/SEC61-alpha family. In terms of assembly, component of the Sec protein translocase complex. Heterotrimer consisting of SecY, SecE and SecG subunits. The heterotrimers can form oligomers, although 1 heterotrimer is thought to be able to translocate proteins. Interacts with the ribosome. Interacts with SecDF, and other proteins may be involved. Interacts with SecA.

It is found in the cell membrane. The central subunit of the protein translocation channel SecYEG. Consists of two halves formed by TMs 1-5 and 6-10. These two domains form a lateral gate at the front which open onto the bilayer between TMs 2 and 7, and are clamped together by SecE at the back. The channel is closed by both a pore ring composed of hydrophobic SecY resides and a short helix (helix 2A) on the extracellular side of the membrane which forms a plug. The plug probably moves laterally to allow the channel to open. The ring and the pore may move independently. The sequence is that of Protein translocase subunit SecY from Lactococcus lactis subsp. lactis (strain IL1403) (Streptococcus lactis).